A 193-amino-acid polypeptide reads, in one-letter code: uncharacterized protein (193 aa).

The first 22 residues, 1–22, serve as a signal peptide directing secretion; sequence MAVQKNVIKGILAGTFALMLSG. The N-palmitoyl cysteine moiety is linked to residue Cys-23. Cys-23 carries the S-diacylglycerol cysteine lipid modification.

The protein resides in the cell membrane. This is an uncharacterized protein from Escherichia coli (strain K12).